The primary structure comprises 175 residues: Peptide deformylase (175 aa).

The Fe cation site is built by Cys99 and His141. Residue Glu142 is part of the active site. His145 contacts Fe cation.

It belongs to the polypeptide deformylase family. Fe(2+) is required as a cofactor.

It catalyses the reaction N-terminal N-formyl-L-methionyl-[peptide] + H2O = N-terminal L-methionyl-[peptide] + formate. Functionally, removes the formyl group from the N-terminal Met of newly synthesized proteins. Requires at least a dipeptide for an efficient rate of reaction. N-terminal L-methionine is a prerequisite for activity but the enzyme has broad specificity at other positions. This is Peptide deformylase from Rickettsia typhi (strain ATCC VR-144 / Wilmington).